The primary structure comprises 807 residues: Tyrosine-protein kinase receptor torso (807 aa).

Residues 1–28 (MYSEGKLLKVFLIFAGFIIFSLCGEVVS) form the signal peptide. Residues 29–370 (QRYPPAPGLL…RAFTPGMLRW (342 aa)) lie on the Extracellular side of the membrane. 4 disulfide bridges follow: C46-C61, C81-C203, C210-C239, and C259-C265. N-linked (GlcNAc...) asparagine glycans are attached at residues N54, N171, N183, and N195. N-linked (GlcNAc...) asparagine glycosylation is found at N307, N323, and N344. A helical transmembrane segment spans residues 371–391 (VWAGATAGAGCAAGGLLAATL). Residues 392–807 (LCCGHRRATS…SPPVIQTKTA (416 aa)) lie on the Cytoplasmic side of the membrane. One can recognise a Protein kinase domain in the interval 439-738 (VLLHEVIGEG…PTFPELHQKL (300 aa)). Residues 445–453 (IGEGAFGVV) and K468 contribute to the ATP site. The active-site Proton acceptor is the D607.

It belongs to the protein kinase superfamily. Tyr protein kinase family. In terms of assembly, homodimer; disulfide-linked. Requires Mg(2+) as cofactor. In terms of processing, may be auto-phosphorylated on tyrosine residues. Post-translationally, at least one of the 3 cysteine residues Cys-381, Cys-393 or Cys-394 is involved in the formation of interchain disulfide bonds. The disulfide bond sites in the extracellular region are not involved in homodimer formation.

The protein localises to the cell membrane. It catalyses the reaction L-tyrosyl-[protein] + ATP = O-phospho-L-tyrosyl-[protein] + ADP + H(+). In terms of biological role, probable receptor tyrosine kinase. During postembryonic development, involved in the initiation of metamorphosis probably by inducing the production of ecdysone in response to prothoracicotropic hormone (PTTH). Binding to PTTH stimulates activation of canonical MAPK signaling leading to ERK phosphorylation. In Bombyx mori (Silk moth), this protein is Tyrosine-protein kinase receptor torso.